The sequence spans 469 residues: ATP synthase subunit beta (469 aa).

An ATP-binding site is contributed by 156–163 (GGAGVGKT).

The protein belongs to the ATPase alpha/beta chains family. F-type ATPases have 2 components, CF(1) - the catalytic core - and CF(0) - the membrane proton channel. CF(1) has five subunits: alpha(3), beta(3), gamma(1), delta(1), epsilon(1). CF(0) has three main subunits: a(1), b(2) and c(9-12). The alpha and beta chains form an alternating ring which encloses part of the gamma chain. CF(1) is attached to CF(0) by a central stalk formed by the gamma and epsilon chains, while a peripheral stalk is formed by the delta and b chains.

It is found in the cell membrane. It carries out the reaction ATP + H2O + 4 H(+)(in) = ADP + phosphate + 5 H(+)(out). In terms of biological role, produces ATP from ADP in the presence of a proton gradient across the membrane. The catalytic sites are hosted primarily by the beta subunits. This is ATP synthase subunit beta from Bacillus anthracis (strain CDC 684 / NRRL 3495).